Here is a 216-residue protein sequence, read N- to C-terminus: Flavin prenyltransferase UbiX (216 aa).

FMN-binding positions include 9–11, Ser35, and Arg144; that span reads GAS. Tyr174 and Arg190 together coordinate dimethylallyl phosphate.

This sequence belongs to the UbiX/PAD1 family.

It catalyses the reaction dimethylallyl phosphate + FMNH2 = prenylated FMNH2 + phosphate. In terms of biological role, flavin prenyltransferase that catalyzes the synthesis of the prenylated FMN cofactor (prenyl-FMN) for 4-hydroxy-3-polyprenylbenzoic acid decarboxylase UbiD. The prenyltransferase is metal-independent and links a dimethylallyl moiety from dimethylallyl monophosphate (DMAP) to the flavin N5 and C6 atoms of FMN. The protein is Flavin prenyltransferase UbiX of Streptomyces coelicolor (strain ATCC BAA-471 / A3(2) / M145).